A 364-amino-acid chain; its full sequence is UDP-N-acetylglucosamine--N-acetylmuramyl-(pentapeptide) pyrophosphoryl-undecaprenol N-acetylglucosamine transferase (364 aa).

UDP-N-acetyl-alpha-D-glucosamine-binding positions include 13–15 (TGG), N125, R165, S192, and Q293.

Belongs to the glycosyltransferase 28 family. MurG subfamily.

The protein resides in the cell inner membrane. It catalyses the reaction di-trans,octa-cis-undecaprenyl diphospho-N-acetyl-alpha-D-muramoyl-L-alanyl-D-glutamyl-meso-2,6-diaminopimeloyl-D-alanyl-D-alanine + UDP-N-acetyl-alpha-D-glucosamine = di-trans,octa-cis-undecaprenyl diphospho-[N-acetyl-alpha-D-glucosaminyl-(1-&gt;4)]-N-acetyl-alpha-D-muramoyl-L-alanyl-D-glutamyl-meso-2,6-diaminopimeloyl-D-alanyl-D-alanine + UDP + H(+). The protein operates within cell wall biogenesis; peptidoglycan biosynthesis. Cell wall formation. Catalyzes the transfer of a GlcNAc subunit on undecaprenyl-pyrophosphoryl-MurNAc-pentapeptide (lipid intermediate I) to form undecaprenyl-pyrophosphoryl-MurNAc-(pentapeptide)GlcNAc (lipid intermediate II). The sequence is that of UDP-N-acetylglucosamine--N-acetylmuramyl-(pentapeptide) pyrophosphoryl-undecaprenol N-acetylglucosamine transferase from Cereibacter sphaeroides (strain ATCC 17025 / ATH 2.4.3) (Rhodobacter sphaeroides).